Consider the following 512-residue polypeptide: Probable ubiquitin carboxyl-terminal hydrolase 3 (512 aa).

Residues 64–109 are disordered; sequence TSKTKESEKSPKSWSAIAKKHVQGDSPVKKSHSVPVPSDRSEKKSF. The USP domain occupies 133–511; that stretch reads RGFINTGNIC…VAYLLFYTRR (379 aa). C142 functions as the Nucleophile in the catalytic mechanism. The Proton acceptor role is filled by H453.

Belongs to the peptidase C19 family.

The catalysed reaction is Thiol-dependent hydrolysis of ester, thioester, amide, peptide and isopeptide bonds formed by the C-terminal Gly of ubiquitin (a 76-residue protein attached to proteins as an intracellular targeting signal).. In Schizosaccharomyces pombe (strain 972 / ATCC 24843) (Fission yeast), this protein is Probable ubiquitin carboxyl-terminal hydrolase 3 (ubp3).